Consider the following 280-residue polypeptide: Tryptophan synthase alpha chain (280 aa).

Active-site proton acceptor residues include Glu-49 and Asp-60.

The protein belongs to the TrpA family. In terms of assembly, tetramer of two alpha and two beta chains.

It carries out the reaction (1S,2R)-1-C-(indol-3-yl)glycerol 3-phosphate + L-serine = D-glyceraldehyde 3-phosphate + L-tryptophan + H2O. The protein operates within amino-acid biosynthesis; L-tryptophan biosynthesis; L-tryptophan from chorismate: step 5/5. Its function is as follows. The alpha subunit is responsible for the aldol cleavage of indoleglycerol phosphate to indole and glyceraldehyde 3-phosphate. The chain is Tryptophan synthase alpha chain from Corynebacterium glutamicum (strain R).